The chain runs to 143 residues: Large ribosomal subunit protein uL15 (143 aa).

Residues 1–52 (MELNTIQPADGAKHYKRRVGRGIGSGLGKTAGRGHKGQKSRSGGFHKVGFEG) form a disordered region. Residues 21–31 (RGIGSGLGKTA) are compositionally biased toward gly residues.

This sequence belongs to the universal ribosomal protein uL15 family. Part of the 50S ribosomal subunit.

Its function is as follows. Binds to the 23S rRNA. This chain is Large ribosomal subunit protein uL15, found in Herminiimonas arsenicoxydans.